A 178-amino-acid polypeptide reads, in one-letter code: tRNA (cytidine(56)-2'-O)-methyltransferase (178 aa).

S-adenosyl-L-methionine-binding positions include Leu84, 109–113 (GAEKV), and 127–134 (IGNQPHSE).

The protein belongs to the aTrm56 family. As to quaternary structure, homodimer.

Its subcellular location is the cytoplasm. It catalyses the reaction cytidine(56) in tRNA + S-adenosyl-L-methionine = 2'-O-methylcytidine(56) in tRNA + S-adenosyl-L-homocysteine + H(+). Its function is as follows. Specifically catalyzes the AdoMet-dependent 2'-O-ribose methylation of cytidine at position 56 in tRNAs. This chain is tRNA (cytidine(56)-2'-O)-methyltransferase, found in Methanococcoides burtonii (strain DSM 6242 / NBRC 107633 / OCM 468 / ACE-M).